A 63-amino-acid chain; its full sequence is MSGRSTFGRFGPPSSEPWERKPGDDEGGPKRPKVERPDTNDLLKRMRRVDPNQSRRYRQRTGE.

The interval 1–63 is disordered; sequence MSGRSTFGRF…SRRYRQRTGE (63 aa). Positions 17-50 are enriched in basic and acidic residues; it reads PWERKPGDDEGGPKRPKVERPDTNDLLKRMRRVD. An Isoglutamyl lysine isopeptide (Glu-Lys) (interchain with K-? in acceptor proteins) cross-link involves residue E63.

This sequence belongs to the ubiquitin-like protein UBact family.

May function as a protein modifier covalently attached to lysine residues of substrate proteins. This may serve to target the modified proteins for degradation by proteasomes. The sequence is that of Prokaryotic ubiquitin-like protein UBact from Handelsmanbacteria sp. (strain RIFCSPLOWO2_12_FULL_64_10).